The following is a 150-amino-acid chain: UPF0178 protein PputW619_5044 (150 aa).

It belongs to the UPF0178 family.

The sequence is that of UPF0178 protein PputW619_5044 from Pseudomonas putida (strain W619).